Reading from the N-terminus, the 692-residue chain is Acyl-coenzyme A oxidase 2, peroxisomal (692 aa).

Residues 1-49 constitute a peroxisome transit peptide; sequence MESRREKNPMTEEESDGLIAARRIQRLSLHLSPSLTPSPSLPLVQTETC. Positions 186, 192, 225, 365, 384, 452, and 473 each coordinate FAD. E475 functions as the Proton acceptor in the catalytic mechanism. An FAD-binding site is contributed by D477.

This sequence belongs to the acyl-CoA oxidase family. Homodimer. FAD serves as cofactor. As to expression, expressed mainly in flowers and young seedlings. Lower expression in roots, leaves and bracts.

It localises to the peroxisome. It catalyses the reaction a 2,3-saturated acyl-CoA + O2 = a (2E)-enoyl-CoA + H2O2. In terms of biological role, catalyzes the desaturation of long-chain acyl-CoAs to 2-trans-enoyl-CoAs. Active on substrates longer than C14 and mostly with C18-CoA. Activity on long-chain mono-unsaturated substrates is double than with the corresponding saturated substrates. This is Acyl-coenzyme A oxidase 2, peroxisomal from Arabidopsis thaliana (Mouse-ear cress).